The chain runs to 417 residues: Gamma-glutamyl phosphate reductase (417 aa).

This sequence belongs to the gamma-glutamyl phosphate reductase family.

It localises to the cytoplasm. The enzyme catalyses L-glutamate 5-semialdehyde + phosphate + NADP(+) = L-glutamyl 5-phosphate + NADPH + H(+). It participates in amino-acid biosynthesis; L-proline biosynthesis; L-glutamate 5-semialdehyde from L-glutamate: step 2/2. Catalyzes the NADPH-dependent reduction of L-glutamate 5-phosphate into L-glutamate 5-semialdehyde and phosphate. The product spontaneously undergoes cyclization to form 1-pyrroline-5-carboxylate. This Escherichia coli (strain K12 / MC4100 / BW2952) protein is Gamma-glutamyl phosphate reductase.